The following is a 562-amino-acid chain: Proton channel OTOP2 (562 aa).

The interval 1–20 (MSEELAQGPKESPPAPRAGP) is disordered. The next 12 helical transmembrane spans lie at 30 to 50 (LLSVLLAVNVLLLACTLISGG), 62 to 82 (VFALLTAMMLLATLWILFYLL), 100 to 120 (PIWLRGGLVLFGICTLIMDVF), 137 to 157 (ILHPLIQAVFVIIQTYFLWVS), 169 to 189 (TWCGLMFTLTTNLAIWMAAVV), 241 to 261 (FYLYPFNIEYSLFASTMLYVM), 289 to 309 (FFAGPVLGLLLFVVGLAVFII), 324 to 344 (ALVIYYSFNIVCLGLTTLVSL), 371 to 391 (LLMGAALGQYAISYYSIVAVV), 402 to 422 (LNLTHALLMIAQHTFQNMFII), 495 to 515 (DISLFLLLCNVILWIMPAFGA), and 527 to 547 (FYGYSLWAVIVNICLPFGIFY).

This sequence belongs to the otopetrin family.

The protein resides in the cell membrane. The enzyme catalyses H(+)(in) = H(+)(out). Its activity is regulated as follows. Actives at neutral and alkaline extracellular pH, acid extracellular pH appears to inhibit the channel. Insensitive to activation by Zn(2+). Its function is as follows. Proton-selective ion channel open at neutral pH. Actives at neutral and alkaline extracellular pH, likely participates in some alkali-related physiological activities. This is Proton channel OTOP2 from Homo sapiens (Human).